The chain runs to 260 residues: Transcriptional activator protein AsaR (260 aa).

Positions 176 to 241 constitute an HTH luxR-type domain; the sequence is EDDPQEALTD…QAIAKGVSSG (66 aa). The segment at residues 200-219 is a DNA-binding region (H-T-H motif); it reads SGEIACILGITERTVNYHLN.

This sequence belongs to the autoinducer-regulated transcriptional regulatory protein family.

Functions as a BHL-responsive transcriptional regulator. This is Transcriptional activator protein AsaR from Aeromonas salmonicida.